The sequence spans 335 residues: Glucose-dependent insulinotropic receptor (335 aa).

Over methionine 1–alanine 12 the chain is Extracellular. Residues valine 13–isoleucine 33 traverse the membrane as a helical segment. The Cytoplasmic segment spans residues histidine 34–aspartate 37. The chain crosses the membrane as a helical span at residues glycine 38 to isoleucine 58. At serine 59 to arginine 81 the chain is on the extracellular side. A helical transmembrane segment spans residues methionine 82–aspartate 102. The Cytoplasmic segment spans residues arginine 103–cysteine 125. Residues isoleucine 126–phenylalanine 146 traverse the membrane as a helical segment. The Extracellular segment spans residues glutamine 147–histidine 164. Residues phenylalanine 165–tyrosine 185 form a helical membrane-spanning segment. Topologically, residues cysteine 186 to threonine 226 are cytoplasmic. The chain crosses the membrane as a helical span at residues valine 227–valine 247. Topologically, residues glutamine 248 to arginine 262 are extracellular. Residues tyrosine 263–glutamine 283 form a helical membrane-spanning segment. The Cytoplasmic segment spans residues lysine 284–glycine 335.

The protein belongs to the G-protein coupled receptor 1 family. As to expression, predominantly expressed in the pancreas, especially in the islets.

It localises to the cell membrane. Receptor for the endogenous fatty-acid ethanolamide oleoylethanolamide (OEA) and lysophosphatidylcholine (LPC). Functions as a glucose-dependent insulinotropic receptor. The activity of this receptor is mediated by G proteins which activate adenylate cyclase. Seems to act through a G(s) mediated pathway. The protein is Glucose-dependent insulinotropic receptor (GPR119) of Homo sapiens (Human).